Reading from the N-terminus, the 587-residue chain is Tyrosine-protein kinase transforming protein Src (587 aa).

Positions 1–58 (MGSSKSKPKDPSQRRRSLEPPDSTHHGGFPASQTPNKTAAPDTHRTPSRSFGTVATEP) are disordered. Glycine 2 carries the N-myristoyl glycine; by host lipid modification. The segment covering 7 to 25 (KPKDPSQRRRSLEPPDSTH) has biased composition (basic and acidic residues). Positions 81-142 (GGVTTFVALY…PSNYVAPSDS (62 aa)) constitute an SH3 domain. The 98-residue stretch at 148–245 (WYFGKITRRE…GLCHRLTNVC (98 aa)) folds into the SH2 domain. The region spanning 267-520 (LRLEVKLGQG…YLQAFLEDYF (254 aa)) is the Protein kinase domain. ATP-binding positions include 273–281 (LGQGCFGEV) and lysine 295. Catalysis depends on aspartate 386, which acts as the Proton acceptor. At tyrosine 416 the chain carries Phosphotyrosine; by autocatalysis.

It belongs to the protein kinase superfamily. Tyr protein kinase family. SRC subfamily. The phosphorylated form is termed pp60v-src.

The enzyme catalyses L-tyrosyl-[protein] + ATP = O-phospho-L-tyrosyl-[protein] + ADP + H(+). Its function is as follows. This phosphoprotein, required for both the initiation and the maintenance of neoplastic transformation, is a protein kinase that catalyzes the phosphorylation of tyrosine residues in vitro. The polypeptide is Tyrosine-protein kinase transforming protein Src (V-SRC) (Galliformes).